Consider the following 154-residue polypeptide: Putative pre-16S rRNA nuclease (154 aa).

Belongs to the YqgF nuclease family.

The protein resides in the cytoplasm. In terms of biological role, could be a nuclease involved in processing of the 5'-end of pre-16S rRNA. This chain is Putative pre-16S rRNA nuclease, found in Pelotomaculum thermopropionicum (strain DSM 13744 / JCM 10971 / SI).